The following is a 57-amino-acid chain: Large ribosomal subunit protein bL33 (57 aa).

This sequence belongs to the bacterial ribosomal protein bL33 family.

The chain is Large ribosomal subunit protein bL33 from Shewanella sp. (strain MR-4).